The primary structure comprises 120 residues: NAD(P)H-quinone oxidoreductase subunit 3 (120 aa).

3 helical membrane passes run 10–30, 64–84, and 89–109; these read FLGF…TNLI, MFAL…PWAV, and LGLL…IALA.

It belongs to the complex I subunit 3 family. In terms of assembly, NDH-1 can be composed of about 15 different subunits; different subcomplexes with different compositions have been identified which probably have different functions.

It is found in the cellular thylakoid membrane. It catalyses the reaction a plastoquinone + NADH + (n+1) H(+)(in) = a plastoquinol + NAD(+) + n H(+)(out). The catalysed reaction is a plastoquinone + NADPH + (n+1) H(+)(in) = a plastoquinol + NADP(+) + n H(+)(out). Its function is as follows. NDH-1 shuttles electrons from an unknown electron donor, via FMN and iron-sulfur (Fe-S) centers, to quinones in the respiratory and/or the photosynthetic chain. The immediate electron acceptor for the enzyme in this species is believed to be plastoquinone. Couples the redox reaction to proton translocation, and thus conserves the redox energy in a proton gradient. Cyanobacterial NDH-1 also plays a role in inorganic carbon-concentration. This chain is NAD(P)H-quinone oxidoreductase subunit 3, found in Prochlorococcus marinus (strain AS9601).